Reading from the N-terminus, the 325-residue chain is Beta-ketoacyl-[acyl-carrier-protein] synthase III (325 aa).

Catalysis depends on residues C119 and H252. The interval 253–257 is ACP-binding; sequence QANIR. N282 is an active-site residue.

The protein belongs to the thiolase-like superfamily. FabH family. In terms of assembly, homodimer.

Its subcellular location is the cytoplasm. It carries out the reaction malonyl-[ACP] + acetyl-CoA + H(+) = 3-oxobutanoyl-[ACP] + CO2 + CoA. It participates in lipid metabolism; fatty acid biosynthesis. Catalyzes the condensation reaction of fatty acid synthesis by the addition to an acyl acceptor of two carbons from malonyl-ACP. Catalyzes the first condensation reaction which initiates fatty acid synthesis and may therefore play a role in governing the total rate of fatty acid production. Possesses both acetoacetyl-ACP synthase and acetyl transacylase activities. Its substrate specificity determines the biosynthesis of branched-chain and/or straight-chain of fatty acids. The protein is Beta-ketoacyl-[acyl-carrier-protein] synthase III of Polaromonas sp. (strain JS666 / ATCC BAA-500).